Consider the following 234-residue polypeptide: bZIP transcription factor 27 (234 aa).

Positions 152–159 match the Nuclear localization signal motif; that stretch reads KKRGQDSD. The region spanning 163–213 is the bZIP domain; that stretch reads GDRRYKRMIKNRESAARSRARKQAYTNELELEIAHLQTENARLKIQQEQLK. Residues 165–184 form a basic motif region; sequence RRYKRMIKNRESAARSRARK. Positions 191-212 are leucine-zipper; the sequence is LELEIAHLQTENARLKIQQEQL. Residue threonine 231 is modified to Phosphothreonine.

Belongs to the bZIP family. As to quaternary structure, self-interacts. Interacts with FT and FD/BZIP14. Interacts with CPK33. Phosphorylated. Expressed on the flanks of the shoot apex.

The protein localises to the nucleus. Transcription factor required for the transition to flowering promoted by FT. In Arabidopsis thaliana (Mouse-ear cress), this protein is bZIP transcription factor 27.